The sequence spans 88 residues: UPF0297 protein SSU98_0066 (88 aa).

It belongs to the UPF0297 family.

In Streptococcus suis (strain 98HAH33), this protein is UPF0297 protein SSU98_0066.